Consider the following 350-residue polypeptide: Protein RecA (350 aa).

Residue 66–73 coordinates ATP; the sequence is GPESSGKT.

This sequence belongs to the RecA family.

The protein localises to the cytoplasm. In terms of biological role, can catalyze the hydrolysis of ATP in the presence of single-stranded DNA, the ATP-dependent uptake of single-stranded DNA by duplex DNA, and the ATP-dependent hybridization of homologous single-stranded DNAs. It interacts with LexA causing its activation and leading to its autocatalytic cleavage. This chain is Protein RecA, found in Dichelobacter nodosus (strain VCS1703A).